Reading from the N-terminus, the 125-residue chain is Large ribosomal subunit protein bL12 (125 aa).

Belongs to the bacterial ribosomal protein bL12 family. Homodimer. Part of the ribosomal stalk of the 50S ribosomal subunit. Forms a multimeric L10(L12)X complex, where L10 forms an elongated spine to which 2 to 4 L12 dimers bind in a sequential fashion. Binds GTP-bound translation factors.

Its function is as follows. Forms part of the ribosomal stalk which helps the ribosome interact with GTP-bound translation factors. Is thus essential for accurate translation. The polypeptide is Large ribosomal subunit protein bL12 (Helicobacter pylori (strain P12)).